The chain runs to 271 residues: Aminoglycoside N(3)-acetyltransferase III (271 aa).

Residues H31, A32, S33, V34, and K35 each coordinate CoA. Positions 64, 72, and 102 each coordinate a 2-deoxystreptamine antibiotic. CoA contacts are provided by S104, V105, and F109. 3 residues coordinate a 2-deoxystreptamine antibiotic: E123, Y146, and D170. 2 residues coordinate CoA: T171 and T173. Residues H176, T212, G213, and F221 each coordinate a 2-deoxystreptamine antibiotic.

This sequence belongs to the antibiotic N-acetyltransferase family. Homodimer.

The enzyme catalyses a 2-deoxystreptamine antibiotic + acetyl-CoA = an N(3)-acetyl-2-deoxystreptamine antibiotic + CoA + H(+). Functionally, resistance to antibiotics containing the 2-deoxy-streptamine ring including dibekacin, gentamicin, kanamycin, sisomicin, tobramycin and neomycin, but not to amikacin or netilmicin. Acetylates a broad range of both 4,5- and 4,6-disubstituted aminoglycosides, including neomycin, paromomycin, ribostamycin, sisomicin, gentamicin, tobramycin and kanamycin, with no preference of one disubstitution over the other. Acetylates sisomicin and kanamycin most and least efficiently, respectively. Does not modify plazomicin. The polypeptide is Aminoglycoside N(3)-acetyltransferase III (Pseudomonas aeruginosa).